A 121-amino-acid polypeptide reads, in one-letter code: Large ribosomal subunit protein bL12 (121 aa).

The protein belongs to the bacterial ribosomal protein bL12 family. In terms of assembly, homodimer. Part of the ribosomal stalk of the 50S ribosomal subunit. Forms a multimeric L10(L12)X complex, where L10 forms an elongated spine to which 2 to 4 L12 dimers bind in a sequential fashion. Binds GTP-bound translation factors.

In terms of biological role, forms part of the ribosomal stalk which helps the ribosome interact with GTP-bound translation factors. Is thus essential for accurate translation. The chain is Large ribosomal subunit protein bL12 from Klebsiella pneumoniae (strain 342).